Reading from the N-terminus, the 406-residue chain is COP9 signalosome complex subunit 4 (406 aa).

At A2 the chain carries N-acetylalanine. Residue K25 is modified to N6-acetyllysine. The PCI domain occupies 197–366 (YRRKFIEAAQ…GIVHFETREA (170 aa)).

This sequence belongs to the CSN4 family. As to quaternary structure, component of the CSN complex, composed of COPS1/GPS1, COPS2, COPS3, COPS4, COPS5, COPS6, COPS7 (COPS7A or COPS7B), COPS8 and COPS9 isoform 1. In the complex, it probably interacts directly with COPS1, COPS2, COPS3, COPS5, COPS6, COPS7 (COPS7A or COPS7B) and COPS8. Interacts with TOR1A; the interaction is direct and associates TOR1A and SNAPIN with the CSN complex. Interacts with STON2; controls STON2 neddylation levels. Interacts with ERCC6.

The protein resides in the cytoplasm. The protein localises to the nucleus. Its subcellular location is the cytoplasmic vesicle. It is found in the secretory vesicle. It localises to the synaptic vesicle. Its function is as follows. Component of the COP9 signalosome complex (CSN), a complex involved in various cellular and developmental processes. The CSN complex is an essential regulator of the ubiquitin (Ubl) conjugation pathway by mediating the deneddylation of the cullin subunits of SCF-type E3 ligase complexes, leading to decrease the Ubl ligase activity of SCF-type complexes such as SCF, CSA or DDB2. Also involved in the deneddylation of non-cullin subunits such as STON2. The complex is also involved in phosphorylation of p53/TP53, c-jun/JUN, IkappaBalpha/NFKBIA, ITPK1, IRF8/ICSBP and SNAPIN, possibly via its association with CK2 and PKD kinases. CSN-dependent phosphorylation of TP53 and JUN promotes and protects degradation by the Ubl system, respectively. The polypeptide is COP9 signalosome complex subunit 4 (COPS4) (Homo sapiens (Human)).